The sequence spans 106 residues: Nucleoid-associated protein RPB_0667 (106 aa).

This sequence belongs to the YbaB/EbfC family. In terms of assembly, homodimer.

It localises to the cytoplasm. The protein localises to the nucleoid. In terms of biological role, binds to DNA and alters its conformation. May be involved in regulation of gene expression, nucleoid organization and DNA protection. The chain is Nucleoid-associated protein RPB_0667 from Rhodopseudomonas palustris (strain HaA2).